Reading from the N-terminus, the 534-residue chain is Protein tweety homolog 2 (534 aa).

The Extracellular portion of the chain corresponds to 1 to 44 (MATARVEYIAPWWVYWLHNLPHVDFSLQRESGDFNPKDPGYQQT). The chain crosses the membrane as a helical span at residues 45–65 (LLFVALFIALCAAVNLLFVSG). At 66 to 87 (YLICLCCCKKEDETETKMTSSC) the chain is on the cytoplasmic side. Residues 88–108 (CVTWTAAVSGLLCCAAVGIGF) form a helical membrane-spanning segment. Residues 109 to 213 (YGNSETNDGV…NASIIEYYRW (105 aa)) lie on the Extracellular side of the membrane. Ca(2+) is bound by residues Glu-113 and Asp-116. Residue Asn-129 is glycosylated (N-linked (GlcNAc...) asparagine). Positions 164 to 166 (RGD) match the RGD motif. 2 N-linked (GlcNAc...) asparagine glycosylation sites follow: Asn-197 and Asn-204. Residues 214–234 (LSYLILFITDVVICLVTCLGL) form a helical membrane-spanning segment. Residues 235–240 (AKKSKC) lie on the Cytoplasmic side of the membrane. A helical membrane pass occupies residues 241 to 261 (LLLTMLCCGLIALMLSWASLA). At 262 to 388 (LETSSAVGTS…IGICYDGVEG (127 aa)) the chain is on the extracellular side. Intrachain disulfides connect Cys-274–Cys-382 and Cys-300–Cys-367. An N-linked (GlcNAc...) asparagine glycan is attached at Asn-352. A helical membrane pass occupies residues 389–409 (LLYLSLFSLLAAVAFTAMVCA). Residues 410–534 (MPRAWKHLAA…PNIYSNVFPA (125 aa)) lie on the Cytoplasmic side of the membrane.

It belongs to the tweety family. In terms of assembly, forms cis-homodimers in the presence of Ca(+2) and forms monomers and trans-dimers in the absence of Ca(2+).

The protein resides in the cell membrane. The catalysed reaction is chloride(in) = chloride(out). It catalyses the reaction L-glutamate(out) = L-glutamate(in). May act as a calcium-independent, swelling-dependent volume-regulated anion channel (VRAC-swell) which plays a pivotal role in the process of regulatory volume decrease (RVD) in the brain through the efflux of anions like chloride and organic osmolytes like glutamate. Probable large-conductance Ca(2+)-activated chloride channel. The polypeptide is Protein tweety homolog 2 (ttyh2) (Xenopus laevis (African clawed frog)).